A 120-amino-acid chain; its full sequence is Large ribosomal subunit protein uL18 (120 aa).

It belongs to the universal ribosomal protein uL18 family. In terms of assembly, part of the 50S ribosomal subunit; part of the 5S rRNA/L5/L18/L25 subcomplex. Contacts the 5S and 23S rRNAs.

Its function is as follows. This is one of the proteins that bind and probably mediate the attachment of the 5S RNA into the large ribosomal subunit, where it forms part of the central protuberance. The chain is Large ribosomal subunit protein uL18 from Halalkalibacterium halodurans (strain ATCC BAA-125 / DSM 18197 / FERM 7344 / JCM 9153 / C-125) (Bacillus halodurans).